We begin with the raw amino-acid sequence, 213 residues long: Orotate phosphoribosyltransferase (213 aa).

Residue Lys26 participates in 5-phospho-alpha-D-ribose 1-diphosphate binding. 34–35 (FF) lines the orotate pocket. Residues 72 to 73 (YK), Arg99, Lys100, Lys103, His105, and 124 to 132 (DDVITAGTA) contribute to the 5-phospho-alpha-D-ribose 1-diphosphate site. Positions 128 and 156 each coordinate orotate.

This sequence belongs to the purine/pyrimidine phosphoribosyltransferase family. PyrE subfamily. Homodimer. The cofactor is Mg(2+).

The enzyme catalyses orotidine 5'-phosphate + diphosphate = orotate + 5-phospho-alpha-D-ribose 1-diphosphate. Its pathway is pyrimidine metabolism; UMP biosynthesis via de novo pathway; UMP from orotate: step 1/2. Functionally, catalyzes the transfer of a ribosyl phosphate group from 5-phosphoribose 1-diphosphate to orotate, leading to the formation of orotidine monophosphate (OMP). The protein is Orotate phosphoribosyltransferase of Pseudomonas putida (strain GB-1).